Here is a 117-residue protein sequence, read N- to C-terminus: Glycine cleavage system H-like protein (117 aa).

The Lipoyl-binding domain occupies 21-103 (IVRLGLSSRM…ESEGWFVVLQ (83 aa)). Lysine 62 is subject to N6-lipoyllysine.

It belongs to the GcvH family. Requires (R)-lipoate as cofactor.

This Chlamydia muridarum (strain MoPn / Nigg) protein is Glycine cleavage system H-like protein.